Reading from the N-terminus, the 478-residue chain is Isoeugenol monooxygenase (478 aa).

Positions 167, 218, 282, and 471 each coordinate Fe cation.

This sequence belongs to the carotenoid oxygenase family. Fe(2+) is required as a cofactor.

It carries out the reaction (E)-isoeugenol + O2 = vanillin + acetaldehyde. With respect to regulation, inhibited by Co(2+), Ni(2+) and Zn(2+), which may inhibit enzyme activity by replacing iron in the catalytic residues. Inhibited by incubation with high concentrations of the iron chelators 1,10-phenanthroline and Tiron. However, iron is not completely removed by the chelators, suggesting that iron is tightly bound to the enzyme. In terms of biological role, involved in isoeugenol degradation. Catalyzes the oxidative cleavage of the side chain double-bond of isoeugenol to form vanillin and acetaldehyde. This chain is Isoeugenol monooxygenase, found in Pseudomonas nitroreducens.